The following is a 230-amino-acid chain: Early E1A protein (230 aa).

Residues 40–48 (PSLHDLFDL) form an interaction with RB1 in competition with E2F1 region. The short motif at 106–110 (LLCLE) is the LXCXE motif, interaction with host RB1 element. Residues 145–163 (CLRCAYYQEQGENSICGLC) fold into a zinc finger. The tract at residues 189 to 230 (KPGSRKRSAVTSRGSVESSKRPCLPEPEQTEPLDLSLKPRPQ) is disordered. A PXDLS motif, CTBP-binding motif is present at residues 220–224 (PLDLS). The Nuclear localization signal motif lies at 226 to 230 (KPRPQ).

This sequence belongs to the adenoviridae E1A protein family. As to quaternary structure, interacts with host UBE2I; this interaction interferes with polySUMOylation. Interacts with host RB1; this interaction induces the aberrant dissociation of RB1-E2F1 complex thereby disrupting the activity of RB1 and activating E2F1-regulated genes. Interacts with host ATF7; the interaction enhances ATF7-mediated viral transactivation activity which requires the zinc binding domains of both proteins. Isoform early E1A 32 kDa protein and isoform early E1A 26 kDa protein interact (via N-terminus) with CUL1 and E3 ubiquitin ligase RBX1; these interactions inhibit RBX1-CUL1-dependent elongation reaction of ubiquitin chains and attenuate ubiquitination of SCF(FBXW7) target proteins. Interacts (via PXLXP motif) with host ZMYND11/BS69 (via MYND-type zinc finger); this interaction inhibits E1A mediated transactivation. Interacts with host EP300; this interaction stimulates the acetylation of RB1 by recruiting EP300 and RB1 into a multimeric-protein complex. Interacts with host CTBP1 and CTBP2; this interaction seems to potentiate viral replication. Interacts with host DCAF7. Interacts with host DYRK1A. Interacts with host KPNA4; this interaction allows E1A import into the host nucleus. Interacts with host EP400; this interaction stabilizes MYC. Interacts with host TBP protein; this interaction probably disrupts the TBP-TATA complex.

The protein resides in the host nucleus. In terms of biological role, plays a role in viral genome replication by driving entry of quiescent cells into the cell cycle. Stimulation of progression from G1 to S phase allows the virus to efficiently use the cellular DNA replicating machinery to achieve viral genome replication. E1A protein has both transforming and trans-activating activities. Induces the disassembly of the E2F1 transcription factor from RB1 by direct competition for the same binding site on RB1, with subsequent transcriptional activation of E2F1-regulated S-phase genes and of the E2 region of the adenoviral genome. Release of E2F1 leads to the ARF-mediated inhibition of MDM2 and causes TP53/p53 to accumulate because it is not targeted for degradation by MDM2-mediated ubiquitination anymore. This increase in TP53, in turn, would arrest the cell proliferation and direct its death but this effect is counteracted by the viral protein E1B-55K. Inactivation of the ability of RB1 to arrest the cell cycle is critical for cellular transformation, uncontrolled cellular growth and proliferation induced by viral infection. Interaction with RBX1 and CUL1 inhibits ubiquitination of the proteins targeted by SCF(FBXW7) ubiquitin ligase complex, and may be linked to unregulated host cell proliferation. The tumorigenesis-restraining activity of E1A may be related to the disruption of the host CtBP-CtIP complex through the CtBP binding motif. The chain is Early E1A protein from Canine adenovirus serotype 1 (strain CLL) (CAdV-1).